A 216-amino-acid polypeptide reads, in one-letter code: Protein Syd (216 aa).

Belongs to the Syd family.

Its subcellular location is the cell inner membrane. In terms of biological role, interacts with the SecY protein in vivo. May bind preferentially to an uncomplexed state of SecY, thus functioning either as a chelating agent for excess SecY in the cell or as a regulatory factor that negatively controls the translocase function. The polypeptide is Protein Syd (Shewanella sp. (strain ANA-3)).